The primary structure comprises 356 residues: Phosphate acyltransferase (356 aa).

The protein belongs to the PlsX family. As to quaternary structure, homodimer. Probably interacts with PlsY.

It localises to the cytoplasm. The catalysed reaction is a fatty acyl-[ACP] + phosphate = an acyl phosphate + holo-[ACP]. Its pathway is lipid metabolism; phospholipid metabolism. In terms of biological role, catalyzes the reversible formation of acyl-phosphate (acyl-PO(4)) from acyl-[acyl-carrier-protein] (acyl-ACP). This enzyme utilizes acyl-ACP as fatty acyl donor, but not acyl-CoA. In Shigella flexneri serotype 5b (strain 8401), this protein is Phosphate acyltransferase.